The primary structure comprises 443 residues: Enolase B (443 aa).

Substrate is bound by residues H156 and E165. E208 (proton donor) is an active-site residue. Residues D243, E296, and D323 each coordinate Mg(2+). Residues E296 and D323 each contribute to the substrate site. The active-site Proton acceptor is K348. Substrate-binding positions include 375–378 and K399; that span reads SHRS.

This sequence belongs to the enolase family. In terms of assembly, homodimer. Requires Mg(2+) as cofactor.

The protein localises to the cytoplasm. The catalysed reaction is (2R)-2-phosphoglycerate = phosphoenolpyruvate + H2O. It functions in the pathway carbohydrate degradation; glycolysis; pyruvate from D-glyceraldehyde 3-phosphate: step 4/5. This Dictyostelium discoideum (Social amoeba) protein is Enolase B (enoB).